The sequence spans 439 residues: Trehalose-phosphatase (439 aa).

2 residues coordinate Mg(2+): D163 and D165. The Proton donor/acceptor role is filled by D165. 282–284 (QRK) provides a ligand contact to substrate. A Mg(2+)-binding site is contributed by D373.

This sequence belongs to the gob-1 trehalose phosphatase family. The cofactor is Mg(2+). As to expression, ubiquitously expressed. Strong expression in intestine.

The catalysed reaction is alpha,alpha-trehalose 6-phosphate + H2O = alpha,alpha-trehalose + phosphate. In terms of biological role, catalyzes the hydrolysis of trehalose 6-phosphate to trehalose and phosphate; prevents the accumulation of toxic levels of trehalose 6-phosphate. The polypeptide is Trehalose-phosphatase (Caenorhabditis elegans).